Consider the following 167-residue polypeptide: RIHPCPVNKCKCSRAPGRSLSYSKRIINEIRQNPSKCQIFFYQTSPPPSLAPYPLQRLRPYPSSMNPRDLEMVVVTNFQSQSKRRVLFNKFQISQLEKRLKQRYLTAQERQELAHTIGLTPTQVKIWFQNHAYKMKRLFHDDHVEASVHKWPIKSAHLQPKVSTRVV.

The homeobox DNA-binding region spans 80–139; the sequence is SQSKRRVLFNKFQISQLEKRLKQRYLTAQERQELAHTIGLTPTQVKIWFQNHAYKMKRLF.

The protein belongs to the NK-2 homeobox family.

It localises to the nucleus. In Echinococcus granulosus (Hydatid tapeworm), this protein is Homeobox protein EgHBX3 (HBX3).